The chain runs to 95 residues: Co-chaperonin GroES (95 aa).

The protein belongs to the GroES chaperonin family. As to quaternary structure, heptamer of 7 subunits arranged in a ring. Interacts with the chaperonin GroEL.

Its subcellular location is the cytoplasm. Its function is as follows. Together with the chaperonin GroEL, plays an essential role in assisting protein folding. The GroEL-GroES system forms a nano-cage that allows encapsulation of the non-native substrate proteins and provides a physical environment optimized to promote and accelerate protein folding. GroES binds to the apical surface of the GroEL ring, thereby capping the opening of the GroEL channel. This Chlorobium phaeovibrioides (strain DSM 265 / 1930) (Prosthecochloris vibrioformis (strain DSM 265)) protein is Co-chaperonin GroES.